The chain runs to 318 residues: Ribose-phosphate pyrophosphokinase 1 (318 aa).

96–101 (RQDKKD) serves as a coordination point for ATP. Mg(2+) is bound by residues D128, H130, D139, and D143. H130 serves as a coordination point for ATP. The tract at residues 212–227 (KDRVAILVDDMADTCG) is binding of phosphoribosylpyrophosphate.

The protein belongs to the ribose-phosphate pyrophosphokinase family. As to quaternary structure, homodimer. The active form is probably a hexamer composed of 3 homodimers. Mg(2+) is required as a cofactor.

The catalysed reaction is D-ribose 5-phosphate + ATP = 5-phospho-alpha-D-ribose 1-diphosphate + AMP + H(+). It participates in metabolic intermediate biosynthesis; 5-phospho-alpha-D-ribose 1-diphosphate biosynthesis; 5-phospho-alpha-D-ribose 1-diphosphate from D-ribose 5-phosphate (route I): step 1/1. Its activity is regulated as follows. Activated by magnesium and inorganic phosphate. Its function is as follows. Catalyzes the synthesis of phosphoribosylpyrophosphate (PRPP) that is essential for nucleotide synthesis. The chain is Ribose-phosphate pyrophosphokinase 1 (PRPS1) from Macaca fascicularis (Crab-eating macaque).